The sequence spans 132 residues: Fatty acid-binding protein, adipocyte (132 aa).

Cysteine 2 carries the post-translational modification N-acetylcysteine. Serine 13 carries the phosphoserine modification. Tyrosine 20 is subject to Phosphotyrosine; by Tyr-kinases. A Nuclear localization signal motif is present at residues 22-32; it reads KEVGVGFATRK. Residue 127–129 participates in a fatty acid binding; that stretch reads RVY.

This sequence belongs to the calycin superfamily. Fatty-acid binding protein (FABP) family. As to quaternary structure, monomer. Homodimer. Interacts with PPARG.

The protein resides in the cytoplasm. It is found in the nucleus. Its function is as follows. Lipid transport protein in adipocytes. Binds both long chain fatty acids and retinoic acid. Delivers long-chain fatty acids and retinoic acid to their cognate receptors in the nucleus. This is Fatty acid-binding protein, adipocyte (Fabp4) from Mus musculus (Mouse).